A 1023-amino-acid chain; its full sequence is Phosphoenolpyruvate carboxylase (1023 aa).

Residues His-199 and Lys-669 contribute to the active site.

It belongs to the PEPCase type 1 family. Mg(2+) serves as cofactor.

The catalysed reaction is oxaloacetate + phosphate = phosphoenolpyruvate + hydrogencarbonate. In terms of biological role, forms oxaloacetate, a four-carbon dicarboxylic acid source for the tricarboxylic acid cycle. This chain is Phosphoenolpyruvate carboxylase, found in Trichormus variabilis (strain ATCC 29413 / PCC 7937) (Anabaena variabilis).